Consider the following 211-residue polypeptide: UPF0056 membrane protein YvbG (211 aa).

6 helical membrane passes run 1-21 (MMFS…NPIG), 47-67 (ILSF…FKLF), 69-89 (INIH…AYNL), 114-134 (ISVT…ATVM), 150-170 (MIGI…SAFI), and 188-208 (LILA…MFPV).

It belongs to the UPF0056 (MarC) family.

The protein resides in the cell membrane. The polypeptide is UPF0056 membrane protein YvbG (yvbG) (Bacillus subtilis (strain 168)).